Here is a 599-residue protein sequence, read N- to C-terminus: Calcium-dependent protein kinase 10 (599 aa).

The N-myristoyl glycine moiety is linked to residue Gly-2. The interval 27-110 is disordered; sequence RQDGDDALPG…PRPRVPPVKR (84 aa). Positions 74–84 are enriched in polar residues; sequence VSTTDTASAEQ. Residues 87–98 are compositionally biased toward low complexity; the sequence is SKSSAGSDSGEA. The Protein kinase domain maps to 133–391; it reads YSLGRKLGQG…AHEVLRHPWV (259 aa). Residues 139 to 147 and Lys-162 contribute to the ATP site; that span reads LGQGQFGTT. Asp-257 (proton acceptor) is an active-site residue. The tract at residues 397–427 is autoinhibitory domain; the sequence is APDKPLDSAVLSRMKQFSAMNKLKKMALRVI. EF-hand domains lie at 434–469, 470–505, 506–541, and 544–575; these read DEIAGLKEMFKMIDTDNSGQITFEELKVGLKKVGAN, LQESEIYALMQAADVDNSGTIDYGEFIAATLHMNKI, EREDHLFAAFQYFDKDGSGYITADELQLACEEFGLG, and QLEEMIREVDEDNDGRIDYNEFVAMMQKPTMG. 20 residues coordinate Ca(2+): Asp-447, Asp-449, Ser-451, Gln-453, Glu-458, Asp-483, Asp-485, Ser-487, Thr-489, Glu-494, Asp-519, Asp-521, Ser-523, Tyr-525, Glu-530, Asp-553, Asp-555, Asp-557, Arg-559, and Glu-564.

It belongs to the protein kinase superfamily. Ser/Thr protein kinase family. CDPK subfamily. Expressed in roots.

The protein localises to the membrane. It carries out the reaction L-seryl-[protein] + ATP = O-phospho-L-seryl-[protein] + ADP + H(+). It catalyses the reaction L-threonyl-[protein] + ATP = O-phospho-L-threonyl-[protein] + ADP + H(+). Activated by calcium. Autophosphorylation may play an important role in the regulation of the kinase activity. Functionally, may play a role in signal transduction pathways that involve calcium as a second messenger. The sequence is that of Calcium-dependent protein kinase 10 from Oryza sativa subsp. japonica (Rice).